Here is a 339-residue protein sequence, read N- to C-terminus: Proto-oncogene serine/threonine-protein kinase mos (339 aa).

The 275-residue stretch at 61-335 folds into the Protein kinase domain; that stretch reads VCLLHRLGSG…LLQKDLKAFR (275 aa). ATP is bound by residues 67–75 and Lys-88; that span reads LGSGGFGSV. Asp-196 (proton acceptor) is an active-site residue.

Belongs to the protein kinase superfamily. Ser/Thr protein kinase family. Interacts with MAP2K1/MEK1. Expressed mainly in gonadal tissues, and cardiac and skeletal muscles.

The protein resides in the cytoplasm. The catalysed reaction is L-seryl-[protein] + ATP = O-phospho-L-seryl-[protein] + ADP + H(+). The enzyme catalyses L-threonyl-[protein] + ATP = O-phospho-L-threonyl-[protein] + ADP + H(+). Serine/threonine kinase involved in the regulation of MAPK signaling. Is an activator of the ERK1/2 signaling cascade playing an essential role in the stimulation of oocyte maturation. This chain is Proto-oncogene serine/threonine-protein kinase mos, found in Rattus norvegicus (Rat).